Here is a 62-residue protein sequence, read N- to C-terminus: Photosystem II reaction center protein Z (62 aa).

Transmembrane regions (helical) follow at residues Ala8–Ala28 and Trp41–Val61.

Belongs to the PsbZ family. As to quaternary structure, PSII is composed of 1 copy each of membrane proteins PsbA, PsbB, PsbC, PsbD, PsbE, PsbF, PsbH, PsbI, PsbJ, PsbK, PsbL, PsbM, PsbT, PsbX, PsbY, PsbZ, Psb30/Ycf12, peripheral proteins PsbO, CyanoQ (PsbQ), PsbU, PsbV and a large number of cofactors. It forms dimeric complexes.

The protein localises to the cellular thylakoid membrane. Functionally, may control the interaction of photosystem II (PSII) cores with the light-harvesting antenna, regulates electron flow through the 2 photosystem reaction centers. PSII is a light-driven water plastoquinone oxidoreductase, using light energy to abstract electrons from H(2)O, generating a proton gradient subsequently used for ATP formation. This chain is Photosystem II reaction center protein Z, found in Gloeothece citriformis (strain PCC 7424) (Cyanothece sp. (strain PCC 7424)).